The following is a 266-amino-acid chain: Small ribosomal subunit protein uS2 (266 aa).

The tract at residues 238–266 is disordered; the sequence is EFASAPDAGKKGRQAQPKKGKRASDAAAE. The span at 248–258 shows a compositional bias: basic residues; sequence KGRQAQPKKGK.

This sequence belongs to the universal ribosomal protein uS2 family.

The sequence is that of Small ribosomal subunit protein uS2 from Xylella fastidiosa (strain M12).